The chain runs to 507 residues: ATP synthase subunit alpha, chloroplastic (507 aa).

170–177 (GDRQTGKT) contacts ATP. Thr-257 carries the post-translational modification Phosphothreonine.

This sequence belongs to the ATPase alpha/beta chains family. F-type ATPases have 2 components, CF(1) - the catalytic core - and CF(0) - the membrane proton channel. CF(1) has five subunits: alpha(3), beta(3), gamma(1), delta(1), epsilon(1). CF(0) has four main subunits: a, b, b' and c.

Its subcellular location is the plastid. The protein localises to the chloroplast thylakoid membrane. The enzyme catalyses ATP + H2O + 4 H(+)(in) = ADP + phosphate + 5 H(+)(out). Its function is as follows. Produces ATP from ADP in the presence of a proton gradient across the membrane. The alpha chain is a regulatory subunit. This Crucihimalaya wallichii (Rock-cress) protein is ATP synthase subunit alpha, chloroplastic.